The following is a 354-amino-acid chain: Guanine nucleotide-binding protein G(i) subunit alpha-3 (354 aa).

The N-myristoyl glycine moiety is linked to residue glycine 2. Residue cysteine 3 is the site of S-palmitoyl cysteine attachment. The 323-residue stretch at lysine 32–tyrosine 354 folds into the G-alpha domain. Residues lysine 35–threonine 48 are G1 motif. Residues glycine 42, glutamate 43, serine 44, glycine 45, lysine 46, serine 47, threonine 48, aspartate 150, serine 151, leucine 175, arginine 176, threonine 177, arginine 178, valine 179, lysine 180, threonine 181, valine 201, glycine 203, asparagine 269, lysine 270, aspartate 272, leucine 273, cysteine 325, alanine 326, and threonine 327 each coordinate GTP. A Mg(2+)-binding site is contributed by serine 47. Residues aspartate 173–threonine 181 form a G2 motif region. Residue threonine 181 coordinates Mg(2+). Positions phenylalanine 196–arginine 205 are G3 motif. Residues isoleucine 265 to aspartate 272 are G4 motif. The tract at residues threonine 324–threonine 329 is G5 motif.

Belongs to the G-alpha family. G(i/o/t/z) subfamily. As to quaternary structure, heterotrimeric G proteins are composed of 3 units; alpha, beta and gamma. The alpha subunit contains the guanine nucleotide binding site. GTP binding causes dissociation of the heterotrimer, liberating the individual subunits so that they can interact with downstream effector proteins. Forms a complex with CCDC88A/GIV and EGFR which leads to enhanced EGFR signaling and triggering of cell migration; ligand stimulation is required for recruitment of GNAI3 to the complex. Interacts (inactive GDP-bound form) with CCDC88A/GIV (via GBA motif); the interaction leads to activation of GNAI3. Interacts (inactive GDP-bound form) with CCDC88C/DAPLE (via GBA motif); the interaction leads to activation of GNAI3. Interacts (inactive GDP-bound form) with NUCB1 (via GBA motif) and NUCB2 (via GBA motif); the interaction leads to activation of GNAI3. Interacts (inactive GDP-bound form) with PLCD4 (via GBA motif); the interaction leads to activation of GNAI3. Interacts with INSR; the interaction is probably mediated by CCDC88A/GIV. Interacts with GPSM1. Interacts (GDP-bound form) with GPSM2 (via GoLoco domains). Does not interact with RGS2. Interacts with RGS8 and RGS10; this strongly enhances the intrinsic GTPase activity. Interacts with RGS16; this strongly enhances the intrinsic GTPase activity. Interacts with RGS12. Interacts (via active GTP- or inactive GDP-bound form) with RGS14. Interacts (via active GTP-bound form) with TRPC5 (via ANK repeats) in a homotetrameric ion channel; the interaction is direct and activates the channel activity.

Its subcellular location is the cytoplasm. The protein resides in the cell membrane. It is found in the cytoskeleton. The protein localises to the microtubule organizing center. It localises to the centrosome. Its function is as follows. Heterotrimeric guanine nucleotide-binding proteins (G proteins) function as transducers downstream of G protein-coupled receptors (GPCRs) in numerous signaling cascades. The alpha chain contains the guanine nucleotide binding site and alternates between an active, GTP-bound state and an inactive, GDP-bound state. Signaling by an activated GPCR promotes GDP release and GTP binding. The alpha subunit has a low GTPase activity that converts bound GTP to GDP, thereby terminating the signal. Both GDP release and GTP hydrolysis are modulated by numerous regulatory proteins. Signaling is mediated via effector proteins, such as adenylate cyclase. Inhibits adenylate cyclase activity, leading to decreased intracellular cAMP levels. Stimulates the activity of receptor-regulated K(+) channels. The active GTP-bound form prevents the association of RGS14 with centrosomes and is required for the translocation of RGS14 from the cytoplasm to the plasma membrane. May play a role in cell division. The active GTP-bound form activates the calcium permeant TRPC5 ion channels. This is Guanine nucleotide-binding protein G(i) subunit alpha-3 (Gnai3) from Mus musculus (Mouse).